The sequence spans 134 residues: Cell division protein SepF (134 aa).

Belongs to the SepF family. Homodimer. Interacts with FtsZ.

Its subcellular location is the cytoplasm. Functionally, cell division protein that is part of the divisome complex and is recruited early to the Z-ring. Probably stimulates Z-ring formation, perhaps through the cross-linking of FtsZ protofilaments. Its function overlaps with FtsA. This chain is Cell division protein SepF, found in Caldanaerobacter subterraneus subsp. tengcongensis (strain DSM 15242 / JCM 11007 / NBRC 100824 / MB4) (Thermoanaerobacter tengcongensis).